We begin with the raw amino-acid sequence, 313 residues long: 2,3-dihydroxyphenylpropionate/2,3-dihydroxicinnamic acid 1,2-dioxygenase (313 aa).

Residue His-115 is the Proton donor of the active site. Residue His-179 is the Proton acceptor of the active site.

Belongs to the LigB/MhpB extradiol dioxygenase family. Homotetramer. Requires Fe(2+) as cofactor.

The catalysed reaction is 3-(2,3-dihydroxyphenyl)propanoate + O2 = (2Z,4E)-2-hydroxy-6-oxonona-2,4-dienedioate + H(+). It catalyses the reaction (2E)-3-(2,3-dihydroxyphenyl)prop-2-enoate + O2 = (2Z,4E,7E)-2-hydroxy-6-oxonona-2,4,7-trienedioate + H(+). It functions in the pathway aromatic compound metabolism; 3-phenylpropanoate degradation. Functionally, catalyzes the non-heme iron(II)-dependent oxidative cleavage of 2,3-dihydroxyphenylpropionic acid and 2,3-dihydroxicinnamic acid into 2-hydroxy-6-ketononadienedioate and 2-hydroxy-6-ketononatrienedioate, respectively. The polypeptide is 2,3-dihydroxyphenylpropionate/2,3-dihydroxicinnamic acid 1,2-dioxygenase (Mycolicibacterium smegmatis (strain ATCC 700084 / mc(2)155) (Mycobacterium smegmatis)).